The following is a 487-amino-acid chain: NAD(+)--arginine ADP-ribosyltransferase EFV (487 aa).

The stretch at 2 to 51 (SQLNKWQKELQALQKANYQETDNQLFNVYRQSLIDIKKRLKVYTENAESL) forms a coiled coil. The TR mART core domain maps to 315 to 487 (LDFFGQSDLQ…DNILEVTILG (173 aa)). Residues 346–358 (TSDA…KILR) and 394–400 (RGVSANE) contribute to the NAD(+) site. Residues Arg-394, Ser-415, and Glu-463 contribute to the active site. An NAD(+)-binding site is contributed by Glu-463.

It is found in the secreted. The enzyme catalyses L-arginyl-[protein] + NAD(+) = N(omega)-(ADP-D-ribosyl)-L-arginyl-[protein] + nicotinamide + H(+). Its function is as follows. A probable mono(ADP-ribosyl)transferase, it may ADP-ribosylate Arg in target protein(s). Upon expression in yeast cells causes cell death. The protein is NAD(+)--arginine ADP-ribosyltransferase EFV of Enterococcus faecalis (strain ATCC 700802 / V583).